The sequence spans 85 residues: Hepcidin (85 aa).

A signal peptide spans 1-24 (MKTFSVAVAVAVVLAFICLQESSA). Positions 25-64 (VPANEEQELEQQIYFADPEMPVESCKMPYYMRENRQGSPA) are excised as a propeptide. 4 cysteine pairs are disulfide-bonded: C66-C83, C69-C72, C70-C79, and C73-C82.

In terms of assembly, monomer. As to expression, expressed in all tissues tested, with highest levels of expression in kidney and lowest levels in liver. Intra-peritoneal injection of lipopolysaccharide results in increased expression in heart, spleen and stomach, but not in kidney or liver.

It is found in the secreted. Its function is as follows. Seems to act as a signaling molecule involved in the maintenance of iron homeostasis. Seems to be required in conjunction with HFE to regulate both intestinal iron absorption and iron storage in macrophages. Functionally, has very strong antibacterial activity against the marine Gram-negative bacteria V.alginolyticus (MIC=24 uM), V.fluvialis, V.harveyis (MIC=12 uM) and V.parahaemolyticus (MIC=6 uM). Has antibacterial activity against the Gram-negative bacteria A.hydrophila (MIC=6 uM), E.coli (MIC=24 uM), and E.coli BL21(DE3)plysS (MIC=6 uM), and the Gram-positive bacteria B.cereus (MIC=24 uM), B.subtilis (MIC=6 uM), C.glutamicum (MIC=3 uM), M.luteus (MIC=3 uM), M.lysodeikticus, S.aureus (MIC=6 uM) and S.epidermis (MIC=12 uM). Possesses antifungal activity against A.niger (MIC=24 uM), F.graminearum (MIC24 uM) and F.solani (MIC=24 uM), but lacks antifungal activity against the yeasts P.pastoris GS115 and C.albicans. The polypeptide is Hepcidin (Larimichthys crocea (Large yellow croaker)).